A 416-amino-acid chain; its full sequence is Transmembrane protease serine 11B (416 aa).

At 1-17 (MYRHGISSQRSWPLWTT) the chain is on the cytoplasmic side. A helical; Signal-anchor for type II membrane protein transmembrane segment spans residues 18–38 (IFIFLGVAAILGVTIGLLVHF). Residues 39-416 (LAVEKTYYYQ…RNWITSKTGL (378 aa)) are Extracellular-facing. The 118-residue stretch at 43–160 (KTYYYQGDFH…ASIKLMEISK (118 aa)) folds into the SEA domain. Residues Asn72 and Asn107 are each glycosylated (N-linked (GlcNAc...) asparagine). The Peptidase S1 domain occupies 185 to 415 (IVNGKSSLEG…YRNWITSKTG (231 aa)). An intrachain disulfide couples Cys210 to Cys226. Active-site charge relay system residues include His225 and Asp270. The N-linked (GlcNAc...) asparagine glycan is linked to Asn315. 2 cysteine pairs are disulfide-bonded: Cys335–Cys351 and Cys362–Cys391. The Charge relay system role is filled by Ser366.

This sequence belongs to the peptidase S1 family.

The protein localises to the cell membrane. Its activity is regulated as follows. Inhibited by aprotinin, leupeptin, benzamidine, SERPINA1, SPINT1 and SPINT2. Serine protease. The polypeptide is Transmembrane protease serine 11B (TMPRSS11B) (Homo sapiens (Human)).